A 233-amino-acid polypeptide reads, in one-letter code: Large ribosomal subunit protein uL1 (233 aa).

Belongs to the universal ribosomal protein uL1 family. Part of the 50S ribosomal subunit.

In terms of biological role, binds directly to 23S rRNA. The L1 stalk is quite mobile in the ribosome, and is involved in E site tRNA release. Protein L1 is also a translational repressor protein, it controls the translation of the L11 operon by binding to its mRNA. The polypeptide is Large ribosomal subunit protein uL1 (Shewanella putrefaciens (strain CN-32 / ATCC BAA-453)).